We begin with the raw amino-acid sequence, 116 residues long: U16-barytoxin-Tl1c (116 aa).

The signal sequence occupies residues 1–20 (MKTIIVFLSLLVLATKFGDA). The propeptide occupies 21–74 (NEGVNQEQMKEVIQNEFREDFLNEMAAMSLLQQLEAIESTLLEKEADRNSRQKR). 3 disulfides stabilise this stretch: C75–C90, C82–C95, and C89–C110.

The protein belongs to the neurotoxin 14 (magi-1) family. 06 (ICK-Trit) subfamily. In terms of tissue distribution, expressed by the venom gland.

Its subcellular location is the secreted. In terms of biological role, ion channel inhibitor. The protein is U16-barytoxin-Tl1c of Trittame loki (Brush-footed trapdoor spider).